Reading from the N-terminus, the 481-residue chain is uncharacterized protein (481 aa).

Positions 1–18 (MSRLPSKTKYHSSHRSLN) are enriched in basic residues. Residues 1–37 (MSRLPSKTKYHSSHRSLNRKTPLLQRSSETNSLRESG) form a disordered region. Positions 24 to 34 (LQRSSETNSLR) are enriched in polar residues. 2 helical membrane-spanning segments follow: residues 172 to 191 (SIST…AGAI) and 195 to 214 (AAAG…YLCW).

It is found in the membrane. This is an uncharacterized protein from Coxiella burnetii (strain RSA 493 / Nine Mile phase I).